An 880-amino-acid chain; its full sequence is Valine--tRNA ligase (880 aa).

Residues 49–59 (PNVTGRLHLGH) carry the 'HIGH' region motif. Residues 525–529 (KMSKS) carry the 'KMSKS' region motif. Lys-528 serves as a coordination point for ATP. Positions 809 to 879 (LEGLINIDEE…AVQKRMAELK (71 aa)) form a coiled coil.

Belongs to the class-I aminoacyl-tRNA synthetase family. ValS type 1 subfamily. As to quaternary structure, monomer.

It is found in the cytoplasm. The catalysed reaction is tRNA(Val) + L-valine + ATP = L-valyl-tRNA(Val) + AMP + diphosphate. Its function is as follows. As ValRS can inadvertently accommodate and process structurally similar amino acids such as threonine, to avoid such errors, it has a 'posttransfer' editing activity that hydrolyzes mischarged Thr-tRNA(Val) in a tRNA-dependent manner. Catalyzes the attachment of valine to tRNA(Val). This chain is Valine--tRNA ligase, found in Bacillus subtilis (strain 168).